A 36-amino-acid chain; its full sequence is Amanexitide proprotein 1 (36 aa).

Residues 1 to 10 (MSDINTARLP) constitute a propeptide that is removed on maturation. Residues 11 to 19 (VFSLPVFFP) constitute a cross-link (cyclopeptide (Val-Pro)). Residues 20–36 (FVSDDIQAVLTRGESLC) constitute a propeptide that is removed on maturation.

This sequence belongs to the MSDIN fungal toxin family. In terms of processing, processed by the macrocyclase-peptidase enzyme POPB to yield a toxic cyclic nonapeptide. POPB first removes 10 residues from the N-terminus. Conformational trapping of the remaining peptide forces the enzyme to release this intermediate rather than proceed to macrocyclization. The enzyme rebinds the remaining peptide in a different conformation and catalyzes macrocyclization of the N-terminal 9 residues. In terms of tissue distribution, expressed in basidiocarps.

In terms of biological role, cyclic nonapeptide that belongs to the MSDIN-like toxin family responsible for a large number of food poisoning cases and deaths. In Amanita exitialis (Guangzhou destroying angel), this protein is Amanexitide proprotein 1.